The sequence spans 2850 residues: Mucin-6 (2850 aa).

An N-terminal signal peptide occupies residues 1–22 (MLRVRQLLLLLLFRGPLIDAGA). Residues 43-256 (GWCSTWGAGH…KLDDPNEICA (214 aa)) form the VWFD 1 domain. 2 disulfides stabilise this stretch: Cys-45/Cys-218 and Cys-67/Cys-255. N-linked (GlcNAc...) asparagine glycosylation is present at Asn-94. Residues 160-183 (HLTEGQGGDEVGTPGTLKQESKGS) are disordered. N-linked (GlcNAc...) asparagine glycosylation is present at Asn-310. Residues 344 to 399 (CPANQVYQECGEVCIKTCSNPQHSCSSPCTFGCFCPHGTLLDDISGNQSCVPVNQC) enclose the TIL 1 domain. Positions 437 to 621 (GHCSLEGGSF…ALEREMDPCS (185 aa)) constitute a VWFD 2 domain. Disulfide bonds link Cys-439–Cys-575 and Cys-461–Cys-620. Residues Asn-528 and Asn-701 are each glycosylated (N-linked (GlcNAc...) asparagine). A TIL 2 domain is found at 806-869 (CPEPKTFQSC…DGQCVPAEEC (64 aa)). One can recognise a VWFD 3 domain in the interval 908–1080 (STCVLYGEGH…NSWKESPLCG (173 aa)). 4 disulfides stabilise this stretch: Cys-910-Cys-1044, Cys-932-Cys-1079, Cys-941-Cys-1041, and Cys-959-Cys-966. N-linked (GlcNAc...) asparagine glycans are attached at residues Asn-1017 and Asn-1221. Positions 1263 to 1281 (EFHSSTSANTPVAPSYLPG) are enriched in low complexity. 16 disordered regions span residues 1263 to 1363 (EFHS…TAEL), 1377 to 1400 (GMSTSQEGTPTSKIPVTQTTTHRV), 1466 to 1504 (VSANSIKPTMSSTGTPVVHTTSGTSSSPQTPRTTHPSTT), 1580 to 1600 (TPPVHTTSGTTSSPQTPRTTH), 1626 to 1650 (IASPTPSAPQTSLATHLPFSSTSSV), 1705 to 1813 (TKTS…SLST), 1877 to 1942 (QTKS…RTTH), 1968 to 1992 (IASPTPSAPQTSLATHLPFSSTSSV), 2049 to 2119 (TSFS…PSTT), 2219 to 2254 (QTKSSFSTDRTSTPHLSQSSTVTPTQPTPIPATTNS), 2276 to 2295 (IAHTPHTTHSLPTAASSSTT), 2306 to 2338 (EQSTTTFPTPSAPQTSLVTSLPPFSTSSVSPTD), 2370 to 2473 (TTPP…FRTP), 2511 to 2621 (PTNP…TFVS), 2634 to 2674 (PTIH…KSTT), and 2692 to 2761 (STMG…GTCS). Over residues 1294–1312 (EELTVWTTPKESTVSSGEY) the composition is skewed to polar residues. A compositionally biased stretch (low complexity) spans 1345-1363 (TSKPTASSLSSSTKTTAEL). Composition is skewed to polar residues over residues 1378–1399 (MSTSQEGTPTSKIPVTQTTTHR) and 1466–1484 (VSANSIKPTMSSTGTPVVH). Tandem repeats lie at residues 1440–1555 (TQNL…PTTE), 1556–1712 (GLNT…FSTD), 1713–1885 (RTST…FSTD), 1886–2054 (RTSA…FSTD), 2055–2227 (RTST…FSTD), 2228–2396 (RTST…FSTE), 2397–2563 (RTST…FPTT), and 2564–2671 (RTST…FSSK). The approximate repeats stretch occupies residues 1440–2671 (TQNLFSTAPH…VPTFSSFSSK (1232 aa)). Residues 1485–1504 (TTSGTSSSPQTPRTTHPSTT) are compositionally biased toward low complexity. Polar residues predominate over residues 1626 to 1639 (IASPTPSAPQTSLA). Residues 1705-1719 (TKTSFSTDRTSTSTS) are compositionally biased toward low complexity. Residues 1720–1757 (APHLSETSAVTAHQSTPTAVSANSIKPTMSSTGTPVVH) are compositionally biased toward polar residues. Positions 1758 to 1777 (TTSGTTSSPQTPRTTHPSTT) are enriched in low complexity. A compositionally biased stretch (polar residues) spans 1778–1813 (VAVSGTVHTTGLPSGTSVHTTTNFPTHSGPQSSLST). Over residues 1893 to 1942 (SQPSTVTPTQSTPIPATTNSLMTTGGLTGTPPVHTTSGTTSSPQTPRTTH) the composition is skewed to low complexity. A compositionally biased stretch (polar residues) spans 1968–1981 (IASPTPSAPQTSLA). The segment covering 2049 to 2061 (TSFSTDRTSTSTS) has biased composition (low complexity). Over residues 2062–2099 (APHLSETSAVTAHQSTPTAVSANSIKPTMSSTGTPVVH) the composition is skewed to polar residues. The span at 2100–2119 (TTSGTTSSPQTPRTTHPSTT) shows a compositional bias: low complexity. The segment covering 2227-2238 (DRTSTPHLSQSS) has biased composition (polar residues). Positions 2282-2295 (TTHSLPTAASSSTT) are enriched in low complexity. Residues 2370 to 2384 (TTPPNTSTPVTHSTS) are compositionally biased toward low complexity. The span at 2385 to 2429 (ATTEAQGSFSTERTSTSYLSHPSSTTVHQSTAGPVITSIKSTMGV) shows a compositional bias: polar residues. Low complexity predominate over residues 2436–2456 (HTTSGTTSSPQTPHSTHPIST). Polar residues predominate over residues 2457–2466 (AAISRTTGIS). Over residues 2516 to 2533 (SVSSASTSRPLSTSLPTT) the composition is skewed to low complexity. Positions 2534–2560 (IKGTGTPQTPVSDINTTSATTQAHSSF) are enriched in polar residues. The segment covering 2561–2584 (PTTRTSTSHLSLPSSMTSTLTPAS) has biased composition (low complexity). The segment covering 2585–2601 (RSASTLQYTPTPSSVSH) has biased composition (polar residues). The segment covering 2639-2674 (TPTPSSRPTSSTGLLSTSKTTSHVPTFSSFSSKSTT) has biased composition (low complexity). Residues 2692–2725 (STMGMTNLPSSGSPDINHTTRPPGSSPLPTSAFL) show a composition bias toward polar residues. A compositionally biased stretch (low complexity) spans 2726-2759 (SRSTSPTGSSSPSTPVSSSNPDSSVSSPPSHPGT). 4 disulfide bridges follow: Cys-2760–Cys-2807, Cys-2774–Cys-2821, Cys-2783–Cys-2841, and Cys-2787–Cys-2843. The 90-residue stretch at 2760–2849 (CSLQEEEHQI…SCVCSPLQCK (90 aa)) folds into the CTCK domain.

In terms of assembly, multimer; disulfide-linked. O-glycosylated. In terms of tissue distribution, expressed in stomach, duodenum and small intestine.

Its subcellular location is the secreted. In terms of biological role, may provide a mechanism for modulation of the composition of the protective mucus layer related to acid secretion or the presence of bacteria and noxious agents in the lumen. Plays an important role in the cytoprotection of epithelial surfaces and are used as tumor markers in a variety of cancers. May play a role in epithelial organogenesis. The chain is Mucin-6 (Muc6) from Mus musculus (Mouse).